The following is a 128-amino-acid chain: UPF0102 protein GSU0650 (128 aa).

It belongs to the UPF0102 family.

This is UPF0102 protein GSU0650 from Geobacter sulfurreducens (strain ATCC 51573 / DSM 12127 / PCA).